We begin with the raw amino-acid sequence, 343 residues long: Phenylalanine--tRNA ligase alpha subunit (343 aa).

A Mg(2+)-binding site is contributed by Glu-256.

This sequence belongs to the class-II aminoacyl-tRNA synthetase family. Phe-tRNA synthetase alpha subunit type 1 subfamily. As to quaternary structure, tetramer of two alpha and two beta subunits. Mg(2+) serves as cofactor.

The protein localises to the cytoplasm. It catalyses the reaction tRNA(Phe) + L-phenylalanine + ATP = L-phenylalanyl-tRNA(Phe) + AMP + diphosphate + H(+). The polypeptide is Phenylalanine--tRNA ligase alpha subunit (Aster yellows witches'-broom phytoplasma (strain AYWB)).